Here is a 118-residue protein sequence, read N- to C-terminus: MKNRYIQQFEDTQLKDKTMPAFKAGDTLRLGITIKEGEKTRTQYFEGVCIAIRGNGVDKTFCVRKIGANNIGVEKIFPFYSESLASVEVLRVGRVRRAKLYYLRDRRGKAARIKEVRH.

Belongs to the bacterial ribosomal protein bL19 family.

In terms of biological role, this protein is located at the 30S-50S ribosomal subunit interface and may play a role in the structure and function of the aminoacyl-tRNA binding site. The polypeptide is Large ribosomal subunit protein bL19 (Helicobacter pylori (strain G27)).